A 279-amino-acid chain; its full sequence is MNLCGFEVGLDKPVFLIAGPCVIESREMAFETAGALKDICAEVGIPFIYKSSYDKANRSSGKSYRGMGMEKGLDILADVKKQLGVPVLTDVHSIEEIPAVAAVVDVLQTPAFLCRQTDFIHAVASCGRPVNIKKGQFLAPGDMKNVVDKAREANGGADNIMVCERGASFGYNNLVSDMRSLAIMRETGCPVVFDATHSVQLPGGQGTASGGQREFVPVLARAAVAVGVAGLFMETHPNPAQALSDGPNAWPLPRMKALLSTLKAIDELVKSRGLLETEA.

Belongs to the KdsA family.

The protein localises to the cytoplasm. It catalyses the reaction D-arabinose 5-phosphate + phosphoenolpyruvate + H2O = 3-deoxy-alpha-D-manno-2-octulosonate-8-phosphate + phosphate. It participates in carbohydrate biosynthesis; 3-deoxy-D-manno-octulosonate biosynthesis; 3-deoxy-D-manno-octulosonate from D-ribulose 5-phosphate: step 2/3. Its pathway is bacterial outer membrane biogenesis; lipopolysaccharide biosynthesis. This Azoarcus sp. (strain BH72) protein is 2-dehydro-3-deoxyphosphooctonate aldolase.